The primary structure comprises 686 residues: Solute carrier family 22 member 23 (686 aa).

2 disordered regions span residues 1-62 (MAID…GGGP) and 169-193 (GNRSNSSGADGGDTPPLPSPPDKGD). N-linked (GlcNAc...) asparagine glycosylation occurs at Asn24. 2 consecutive transmembrane segments (helical) span residues 234–254 (FSLLVGLIFGYLITGCIADWV) and 258–278 (PVLLFSIIFILIFGLTVALSV). A glycan (N-linked (GlcNAc...) asparagine) is linked at Asn279. A run of 8 helical transmembrane segments spans residues 288 to 308 (FFEGFCLAGIILTLYALRIEL), 315 to 335 (FMITMVASFVAMAGQFLMPGL), 344 to 364 (VLQALIICPFLLMLLYWSIFP), 467 to 487 (ADYYTTASIALVSCLAMCVVV), 494 to 514 (GGLLLFMILTALASLLQLGLL), 538 to 558 (IAFSIVGMFASHAVGSLSVFF), 569 to 589 (CGGLGLVLASAGFGMLTAPII), and 598 to 618 (FLHHIIFACCTLICIICILLL).

The protein belongs to the major facilitator (TC 2.A.1) superfamily. Organic cation transporter (TC 2.A.1.19) family.

The protein resides in the membrane. The polypeptide is Solute carrier family 22 member 23 (SLC22A23) (Homo sapiens (Human)).